The sequence spans 475 residues: E3 ubiquitin-protein ligase TRIM21 (475 aa).

Residues 16-55 form an RING-type zinc finger; it reads CPICLDPFVEPVSIECGHSFCQECISQVGKGGGSVCPVCR. Zn(2+)-binding residues include Cys-92, His-95, Cys-114, and His-120. The B box-type zinc finger occupies 92–123; that stretch reads CAVHGERLHLFCEKDGKALCWVCAQSRKHRDH. A coiled-coil region spans residues 128 to 238; sequence LEEAAQEYQE…ISELDRRCHS (111 aa). Phosphoserine is present on Ser-266. A B30.2/SPRY domain is found at 268–465; that stretch reads ELRSVCHVPG…NTAPLTLCPL (198 aa).

This sequence belongs to the TRIM/RBCC family. In terms of assembly, homotrimer. Interacts (via C-terminus) with IRF8 (via C-terminus). Component of a SCF(SKP2)-like complex containing CUL1, SKP1, TRIM21 and SKP2. Interacts with CALR, CUL1, FBXW11, HSPA5, IKBKB, IRF3, SKP1 and VCP. Interacts with SKP2; the interaction with SKP2 does not depend on an intact F-box domain. Interacts (via N-terminus and C-terminus) with DCP2 (via N-terminus and C-terminus). Interacts with ULK1, BECN1 and with ATG8 family members, including GABARAP, GABARAPL1, GABARAPL2 and MAP1LC3C/LC3C. Interacts with TRIM21 and SQSTM1/sequestosome 1. Interacts with IRF3. Interacts (via the SPRY domain) with NMI (via coiled-coil domain); the interaction promotes 'Lys-63'-linked ubiquitination of NMI. Interacts with IFI35 and NMI; the interaction facilitates NMI-IFI35 complex formation. As to quaternary structure, (Microbial infection) Interacts (via B30.2/SPRY domain) with severe fever with thrombocytopenia syndrome virus (SFTSV) NSs; this interaction activates NFE2L2-mediated transcriptional activation of antioxidant genes. In terms of processing, autoubiquitinated; does not lead to its proteasomal degradation. Deubiquitinated by USP4; leading to its stabilization. Isoform 1 and isoform 2 are expressed in fetal and adult heart and fetal lung.

The protein resides in the cytoplasm. It localises to the cytoplasmic vesicle. It is found in the autophagosome. The protein localises to the nucleus. Its subcellular location is the P-body. The protein resides in the stress granule. The enzyme catalyses S-ubiquitinyl-[E2 ubiquitin-conjugating enzyme]-L-cysteine + [acceptor protein]-L-lysine = [E2 ubiquitin-conjugating enzyme]-L-cysteine + N(6)-ubiquitinyl-[acceptor protein]-L-lysine.. The protein operates within protein modification; protein ubiquitination. E3 ubiquitin-protein ligase whose activity is dependent on E2 enzymes, UBE2D1, UBE2D2, UBE2E1 and UBE2E2. Forms a ubiquitin ligase complex in cooperation with the E2 UBE2D2 that is used not only for the ubiquitination of USP4 and IKBKB but also for its self-ubiquitination. Component of cullin-RING-based SCF (SKP1-CUL1-F-box protein) E3 ubiquitin-protein ligase complexes such as SCF(SKP2)-like complexes. A TRIM21-containing SCF(SKP2)-like complex is shown to mediate ubiquitination of CDKN1B ('Thr-187' phosphorylated-form), thereby promoting its degradation by the proteasome. Monoubiquitinates IKBKB that will negatively regulates Tax-induced NF-kappa-B signaling. Negatively regulates IFN-beta production post-pathogen recognition by catalyzing polyubiquitin-mediated degradation of IRF3. Mediates the ubiquitin-mediated proteasomal degradation of IgG1 heavy chain, which is linked to the VCP-mediated ER-associated degradation (ERAD) pathway. Promotes IRF8 ubiquitination, which enhanced the ability of IRF8 to stimulate cytokine genes transcription in macrophages. Plays a role in the regulation of the cell cycle progression. Enhances the decapping activity of DCP2. Exists as a ribonucleoprotein particle present in all mammalian cells studied and composed of a single polypeptide and one of four small RNA molecules. At least two isoforms are present in nucleated and red blood cells, and tissue specific differences in RO/SSA proteins have been identified. The common feature of these proteins is their ability to bind HY RNAs.2. Involved in the regulation of innate immunity and the inflammatory response in response to IFNG/IFN-gamma. Organizes autophagic machinery by serving as a platform for the assembly of ULK1, Beclin 1/BECN1 and ATG8 family members and recognizes specific autophagy targets, thus coordinating target recognition with assembly of the autophagic apparatus and initiation of autophagy. Also regulates autophagy through FIP200/RB1CC1 ubiquitination and subsequent decreased protein stability. Represses the innate antiviral response by facilitating the formation of the NMI-IFI35 complex through 'Lys-63'-linked ubiquitination of NMI. During viral infection, promotes cell pyroptosis by mediating 'Lys-6'-linked ubiquitination of ISG12a/IFI27, facilitating its translocation into the mitochondria and subsequent CASP3 activation. When up-regulated through the IFN/JAK/STAT signaling pathway, promotes 'Lys-27'-linked ubiquitination of MAVS, leading to the recruitment of TBK1 and up-regulation of innate immunity. Mediates 'Lys-63'-linked polyubiquitination of G3BP1 in response to heat shock, leading to stress granule disassembly. The sequence is that of E3 ubiquitin-protein ligase TRIM21 from Homo sapiens (Human).